We begin with the raw amino-acid sequence, 886 residues long: MEKSSSSSINPPSLSGDEIREAFINFFVQHNHQKLASSSLIPDDPTVLLTIAGMLPFKPIFLGLKESSTPRATSSQKCIRTNDIENVGRTARHHTFFEMLGNFSFGDYFKKEAIQWAWELSTEVFRLNPQNIVISVFKEDLEAEQIWKEVVGVDANRIIRMGAADNFWSSGATGPCGPCSELYFDFKPELGSDEIDLEDDSRFIEFYNLVFMQYNRDLEGNLEPLANCHIDTGMGLERMAQILQKKSNNYETDLIFPLIKAAALLAQLEYETTNKKNKTSLKIIGDHCRAVTHLICDGVSASNLGRGYILRRLIRRMIRHGRLVGIVQPFLPQLAEMAIELMKNAYPQLLEKKKIILNELKIEESRFLETLERGEKLLAEITSHECDLISGAQAFELYDTYGFPLELTEEIANEKGISVDINGFENEMAKQRKRAKEASVSIDLTEEGSIEREISLFDETRFEGYEKLETTSTVIGIFKNNESVKQAVQGDLVKIIVNRTPFYAESGGQIGDKGIITSQDLEVSVENVRKKKNIFIHSGIVNTGVLEINSSVQMNVTPSFRQRTTSNHTATHLLQSALKLSIDSSVSQRGSLVSNHRLRFDFNAPKPLTIKELEDMEVRINQWINEDHPIQIKTMPIKEAMAAGALAMFGEKYGDVVRVVDVPGVSMELCGGTHVTRTSQLGTFKIINETGIASGIRRIEAIAGPSVLDYFNERDLVVKELSKSFKVQSYEIVERVSSLQLELKDKTKELIKVKNDLALAKALGLASYAKSVGKSKLLIRRLDGVDGSGLQSAASSLIDHLGKYSAVIFGGIPNQEIDNKLVFVAAFSPDLVSDGLHAGKFISGVAKMCGGGGGGRPNLAQAGGSQPQSLDLALEKANENLTQQLS.

The Zn(2+) site is built by histidine 568, histidine 572, cysteine 670, and histidine 674.

It belongs to the class-II aminoacyl-tRNA synthetase family. Requires Zn(2+) as cofactor.

It is found in the cytoplasm. It carries out the reaction tRNA(Ala) + L-alanine + ATP = L-alanyl-tRNA(Ala) + AMP + diphosphate. Functionally, catalyzes the attachment of alanine to tRNA(Ala) in a two-step reaction: alanine is first activated by ATP to form Ala-AMP and then transferred to the acceptor end of tRNA(Ala). Also edits incorrectly charged Ser-tRNA(Ala) and Gly-tRNA(Ala) via its editing domain. This chain is Alanine--tRNA ligase, found in Prochlorococcus marinus (strain NATL1A).